Reading from the N-terminus, the 189-residue chain is Small ribosomal subunit protein uS5 (189 aa).

One can recognise an S5 DRBM domain in the interval 20–83; sequence FMDRLVHINR…ESAKRSLIRV (64 aa).

Belongs to the universal ribosomal protein uS5 family. In terms of assembly, part of the 30S ribosomal subunit. Contacts proteins S4 and S8.

With S4 and S12 plays an important role in translational accuracy. Its function is as follows. Located at the back of the 30S subunit body where it stabilizes the conformation of the head with respect to the body. The chain is Small ribosomal subunit protein uS5 from Methylocella silvestris (strain DSM 15510 / CIP 108128 / LMG 27833 / NCIMB 13906 / BL2).